The primary structure comprises 263 residues: uncharacterized protein (263 aa).

31-38 (GPTGSGKT) contacts ATP.

This sequence belongs to the CbbQ/NirQ/NorQ/GpvN family.

This is an uncharacterized protein from Staphylococcus aureus (strain USA300).